A 442-amino-acid polypeptide reads, in one-letter code: tRNA-2-methylthio-N(6)-dimethylallyladenosine synthase (442 aa).

The region spanning 5-122 is the MTTase N-terminal domain; sequence KKVFIKTLGC…LPEMIKQKQK (118 aa). [4Fe-4S] cluster is bound by residues cysteine 14, cysteine 51, cysteine 85, cysteine 159, cysteine 163, and cysteine 166. One can recognise a Radical SAM core domain in the interval 145–378; that stretch reads KAEGAKAYVS…DLLNSNAQII (234 aa). Residues 380–442 enclose the TRAM domain; it reads RQMVGTNQRI…LPNSLRGELI (63 aa).

It belongs to the methylthiotransferase family. MiaB subfamily. Monomer. It depends on [4Fe-4S] cluster as a cofactor.

It localises to the cytoplasm. The enzyme catalyses N(6)-dimethylallyladenosine(37) in tRNA + (sulfur carrier)-SH + AH2 + 2 S-adenosyl-L-methionine = 2-methylsulfanyl-N(6)-dimethylallyladenosine(37) in tRNA + (sulfur carrier)-H + 5'-deoxyadenosine + L-methionine + A + S-adenosyl-L-homocysteine + 2 H(+). Its function is as follows. Catalyzes the methylthiolation of N6-(dimethylallyl)adenosine (i(6)A), leading to the formation of 2-methylthio-N6-(dimethylallyl)adenosine (ms(2)i(6)A) at position 37 in tRNAs that read codons beginning with uridine. This is tRNA-2-methylthio-N(6)-dimethylallyladenosine synthase from Francisella tularensis subsp. holarctica (strain LVS).